A 43-amino-acid chain; its full sequence is Photosystem II reaction center protein Y (43 aa).

The chain crosses the membrane as a helical span at residues 8–26 (LFLVVAPILAAVSWAAFNI).

Belongs to the PsbY family. As to quaternary structure, PSII is composed of 1 copy each of membrane proteins PsbA, PsbB, PsbC, PsbD, PsbE, PsbF, PsbH, PsbI, PsbJ, PsbK, PsbL, PsbM, PsbT, PsbX, PsbY, PsbZ, Psb30/Ycf12, peripheral proteins PsbO, CyanoQ (PsbQ), PsbU, PsbV and a large number of cofactors. It forms dimeric complexes.

It is found in the cellular thylakoid membrane. Functionally, loosely associated component of the core of photosystem II (PSII), it is not always seen in crystals. PSII is a light-driven water plastoquinone oxidoreductase, using light energy to abstract electrons from H(2)O, generating a proton gradient subsequently used for ATP formation. The polypeptide is Photosystem II reaction center protein Y (Parasynechococcus marenigrum (strain WH8102)).